A 491-amino-acid polypeptide reads, in one-letter code: Ketol-acid reductoisomerase (NADP(+)) (491 aa).

The KARI N-terminal Rossmann domain occupies 15–208 (AQLGKCRFMG…GGHRAGVLES (194 aa)). NADP(+) contacts are provided by residues 45-48 (CGAQ), Arg-68, Arg-76, Ser-78, and 108-110 (DKQ). His-132 is an active-site residue. Residue Gly-158 coordinates NADP(+). 2 KARI C-terminal knotted domains span residues 209–344 (SFVA…TAPQ) and 345–484 (FEGK…MTDM). Positions 217, 221, 389, and 393 each coordinate Mg(2+). Ser-414 contacts substrate.

This sequence belongs to the ketol-acid reductoisomerase family. Mg(2+) serves as cofactor.

The catalysed reaction is (2R)-2,3-dihydroxy-3-methylbutanoate + NADP(+) = (2S)-2-acetolactate + NADPH + H(+). The enzyme catalyses (2R,3R)-2,3-dihydroxy-3-methylpentanoate + NADP(+) = (S)-2-ethyl-2-hydroxy-3-oxobutanoate + NADPH + H(+). The protein operates within amino-acid biosynthesis; L-isoleucine biosynthesis; L-isoleucine from 2-oxobutanoate: step 2/4. It participates in amino-acid biosynthesis; L-valine biosynthesis; L-valine from pyruvate: step 2/4. Involved in the biosynthesis of branched-chain amino acids (BCAA). Catalyzes an alkyl-migration followed by a ketol-acid reduction of (S)-2-acetolactate (S2AL) to yield (R)-2,3-dihydroxy-isovalerate. In the isomerase reaction, S2AL is rearranged via a Mg-dependent methyl migration to produce 3-hydroxy-3-methyl-2-ketobutyrate (HMKB). In the reductase reaction, this 2-ketoacid undergoes a metal-dependent reduction by NADPH to yield (R)-2,3-dihydroxy-isovalerate. This is Ketol-acid reductoisomerase (NADP(+)) from Salmonella schwarzengrund (strain CVM19633).